The following is a 28-amino-acid chain: Glutathione S-transferase 5 (28 aa).

The 28-residue stretch at 1–28 (PNYKLTYFNLRGRAEISRYLFAYAGIKY) folds into the GST N-terminal domain. Tyrosine 7 lines the glutathione pocket.

It belongs to the GST superfamily. Sigma family. Homodimer.

It is found in the cytoplasm. The enzyme catalyses RX + glutathione = an S-substituted glutathione + a halide anion + H(+). In terms of biological role, conjugation of reduced glutathione to a wide number of exogenous and endogenous hydrophobic electrophiles. This chain is Glutathione S-transferase 5, found in Gallus gallus (Chicken).